We begin with the raw amino-acid sequence, 26 residues long: uncharacterized protein (26 aa).

Residues 3 to 23 traverse the membrane as a helical segment; that stretch reads IIYLILFLIVIYLLYRILDVL.

It localises to the membrane. This is an uncharacterized protein from Helicobacter pylori (strain J99 / ATCC 700824) (Campylobacter pylori J99).